Reading from the N-terminus, the 195-residue chain is Recombination protein RecR (195 aa).

A C4-type zinc finger spans residues C53–C68. The region spanning S76–P171 is the Toprim domain.

Belongs to the RecR family.

May play a role in DNA repair. It seems to be involved in an RecBC-independent recombinational process of DNA repair. It may act with RecF and RecO. This Anaplasma marginale (strain St. Maries) protein is Recombination protein RecR.